The primary structure comprises 397 residues: Tryptophan synthase beta chain (397 aa).

Lys-86 bears the N6-(pyridoxal phosphate)lysine mark.

Belongs to the TrpB family. Tetramer of two alpha and two beta chains. Pyridoxal 5'-phosphate serves as cofactor.

It catalyses the reaction (1S,2R)-1-C-(indol-3-yl)glycerol 3-phosphate + L-serine = D-glyceraldehyde 3-phosphate + L-tryptophan + H2O. The protein operates within amino-acid biosynthesis; L-tryptophan biosynthesis; L-tryptophan from chorismate: step 5/5. The beta subunit is responsible for the synthesis of L-tryptophan from indole and L-serine. In Tolumonas auensis (strain DSM 9187 / NBRC 110442 / TA 4), this protein is Tryptophan synthase beta chain.